The chain runs to 254 residues: ATP synthase subunit a (254 aa).

Residues Met1 to His6 constitute a propeptide, removed in mature form. 7 helical membrane-spanning segments follow: residues Leu32–Met52, Ile83–Ile103, Ser119–Leu139, Phe146–Ile166, Leu182–Pro202, Thr207–Leu227, and Glu228–Lys248.

This sequence belongs to the ATPase A chain family. In terms of assembly, F-type ATPases have 2 components, CF(1) - the catalytic core - and CF(0) - the membrane proton channel. CF(1) has five subunits: alpha(3), beta(3), gamma(1), delta(1), epsilon(1). CF(0) has three main subunits: a, b and c.

The protein localises to the mitochondrion inner membrane. Functionally, mitochondrial membrane ATP synthase (F(1)F(0) ATP synthase or Complex V) produces ATP from ADP in the presence of a proton gradient across the membrane which is generated by electron transport complexes of the respiratory chain. F-type ATPases consist of two structural domains, F(1) - containing the extramembraneous catalytic core and F(0) - containing the membrane proton channel, linked together by a central stalk and a peripheral stalk. During catalysis, ATP synthesis in the catalytic domain of F(1) is coupled via a rotary mechanism of the central stalk subunits to proton translocation. Key component of the proton channel; it may play a direct role in the translocation of protons across the membrane. The chain is ATP synthase subunit a (ATP6) from Mycosarcoma maydis (Corn smut fungus).